We begin with the raw amino-acid sequence, 105 residues long: Met repressor (105 aa).

It belongs to the MetJ family. Homodimer.

The protein localises to the cytoplasm. In terms of biological role, this regulatory protein, when combined with SAM (S-adenosylmethionine) represses the expression of the methionine regulon and of enzymes involved in SAM synthesis. The chain is Met repressor from Citrobacter koseri (strain ATCC BAA-895 / CDC 4225-83 / SGSC4696).